The chain runs to 385 residues: Elsinochromes biosynthesis cluster protein HP2 (385 aa).

A signal peptide spans 1–22; it reads MVLLYILIMVALIPMYMTVVQD. The next 2 membrane-spanning stretches (helical) occupy residues 94 to 114 and 148 to 168; these read TVLS…SMFD and FYGQ…IVLW. The N-linked (GlcNAc...) asparagine glycan is linked to Asn-187. The chain crosses the membrane as a helical span at residues 209–229; the sequence is SWTFGQIVPIVLLVSPLVAAF. Asn-248 carries an N-linked (GlcNAc...) asparagine glycan. Helical transmembrane passes span 309 to 329 and 344 to 364; these read AILF…LPLA and YYAF…AVPF.

The protein resides in the membrane. Its function is as follows. Part of the gene cluster that mediates the biosynthesis of elsinochromes, pigments consisting of at least four interconvertible tautomers (A, B, C and D) that have a core phenolic quinone to which various side chains are attached and which play an important role in fungal pathogenesis. The non-reducing polyketide synthase PKS1 was proposed to iteratively catalyze decarboxylation between acetyl-CoA and malonyl-CoA subunits for polyketide chain elongation. The released polyketide undergoes cyclization to form an aromatic ring, and proceeds via serial modification steps to produce the heptaketide back- bone of elsinochrome. As elsinochrome has a symmetrical structure, two identical heptaketides are fused to form a core 1,2-dihydrobenzo-perylene ring structure, which can then be successively modified to produce the various derivatives of elsinochrome. Some of these reactions may be cooperatively carried out, at least in part, by the products of RDT1, OXR1 and PKS1. PRF1, embedded within the elsinochrome cluster possibly functions to stabilize some of the biosynthetic enzymes required for elsinochrome production. As prefoldin is a hexamer containing 2 a and 4 b subunits, additional prefoldin subunits, whose coding genes may not immediately link to the elsinochrome biosynthetic gene cluster, are required to fulfill the chaperone function. In addition, no methyltransferase-coding gene exists within the biosynthetic gene cluster, even though elsinochrome has four methyl groups at positions C3, C7, C8 and C12. Apparently, the identified gene cluster does not contain the entire entourage of genes responsible for elsinochrome biosynthesis. Once elsinochrome is synthesized, it must be exported outside the fungal cells, which is probably accomplished by the ECT1 transporter, to avoid toxicity. The polypeptide is Elsinochromes biosynthesis cluster protein HP2 (Elsinoe fawcettii (Citrus scab fungus)).